The chain runs to 343 residues: Protein RecA (343 aa).

64–71 (GPESSGKT) provides a ligand contact to ATP.

This sequence belongs to the RecA family.

The protein localises to the cytoplasm. Its function is as follows. Can catalyze the hydrolysis of ATP in the presence of single-stranded DNA, the ATP-dependent uptake of single-stranded DNA by duplex DNA, and the ATP-dependent hybridization of homologous single-stranded DNAs. It interacts with LexA causing its activation and leading to its autocatalytic cleavage. This Bacillus cereus (strain ATCC 10987 / NRS 248) protein is Protein RecA.